A 568-amino-acid polypeptide reads, in one-letter code: Proline--tRNA ligase (568 aa).

Belongs to the class-II aminoacyl-tRNA synthetase family. ProS type 1 subfamily. Homodimer.

The protein resides in the cytoplasm. It carries out the reaction tRNA(Pro) + L-proline + ATP = L-prolyl-tRNA(Pro) + AMP + diphosphate. In terms of biological role, catalyzes the attachment of proline to tRNA(Pro) in a two-step reaction: proline is first activated by ATP to form Pro-AMP and then transferred to the acceptor end of tRNA(Pro). As ProRS can inadvertently accommodate and process non-cognate amino acids such as alanine and cysteine, to avoid such errors it has two additional distinct editing activities against alanine. One activity is designated as 'pretransfer' editing and involves the tRNA(Pro)-independent hydrolysis of activated Ala-AMP. The other activity is designated 'posttransfer' editing and involves deacylation of mischarged Ala-tRNA(Pro). The misacylated Cys-tRNA(Pro) is not edited by ProRS. The chain is Proline--tRNA ligase from Aliarcobacter butzleri (strain RM4018) (Arcobacter butzleri).